The following is a 95-amino-acid chain: Small ribosomal subunit protein bS6 (95 aa).

The protein belongs to the bacterial ribosomal protein bS6 family.

In terms of biological role, binds together with bS18 to 16S ribosomal RNA. This is Small ribosomal subunit protein bS6 from Thermoanaerobacter pseudethanolicus (strain ATCC 33223 / 39E) (Clostridium thermohydrosulfuricum).